A 112-amino-acid chain; its full sequence is Protein BEX5 (112 aa).

Basic and acidic residues-rich tracts occupy residues Met1–Glu12 and Pro30–Met51. The tract at residues Met1–Val56 is disordered. The interval His101–His105 is his cluster. Zn(2+) is bound at residue Cys109.

This sequence belongs to the BEX family. Post-translationally, ubiquitinated. Degraded by the proteasome.

It localises to the cytoplasm. The polypeptide is Protein BEX5 (BEX5) (Bos taurus (Bovine)).